Consider the following 807-residue polypeptide: Leucine--tRNA ligase (807 aa).

The 'HIGH' region motif lies at 40 to 51 (PYPSGSGLHVGH). The short motif at 576 to 580 (KMSKS) is the 'KMSKS' region element. K579 contacts ATP.

It belongs to the class-I aminoacyl-tRNA synthetase family.

It localises to the cytoplasm. The catalysed reaction is tRNA(Leu) + L-leucine + ATP = L-leucyl-tRNA(Leu) + AMP + diphosphate. The chain is Leucine--tRNA ligase from Chlorobaculum tepidum (strain ATCC 49652 / DSM 12025 / NBRC 103806 / TLS) (Chlorobium tepidum).